Here is a 1091-residue protein sequence, read N- to C-terminus: Rho GTPase-activating protein 7 (1091 aa).

The region spanning 11–78 is the SAM domain; the sequence is LTQIEAKEAC…LNKCAVMKLE (68 aa). Phosphoserine occurs at positions 86, 89, and 320. Positions 273–447 are focal adhesion-targeting (FAT); it reads QLNCVEISAL…RLSIYDNVPG (175 aa). Disordered regions lie at residues 292–327, 382–439, and 491–553; these read VRKR…RTRS, PKAL…SSRL, and SDEG…GVGA. Low complexity-rich tracts occupy residues 297 to 323 and 386 to 400; these read VSNS…SPVT and SNGS…SSVN. Over residues 414–425 the composition is skewed to basic and acidic residues; sequence LRRENSSDSPKE. The span at 499 to 511 shows a compositional bias: polar residues; the sequence is ALDSVSPCPSSPK. The segment covering 513–523 has biased composition (basic and acidic residues); sequence IHLDVDNDRAT. The span at 526–535 shows a compositional bias: polar residues; it reads DLDSTGNSLN. The polybasic cluster (PBR) stretch occupies residues 614 to 636; that stretch reads KHGFSWAVPKFMKRIKVPDYKDR. The Rho-GAP domain maps to 641 to 847; sequence VPLTVNVQRT…HMIAECKKLF (207 aa). Residues 877 to 1084 form the START domain; that stretch reads RNDESADYQH…RDSFSNQNTE (208 aa).

As to quaternary structure, interacts with EF1A1, facilitates EF1A1 distribution to the membrane periphery and ruffles upon growth factor stimulation and suppresses cell migration. Interacts with tensin TNS1 (via N-terminus); the interaction is decreased by phosphorylation of TNS1. Interacts with TNS3 and PTEN; in resting cells, interacts with TNS3 (via C2 tensin-type domain) but, following growth factor stimulation, TNS3 and PTEN are phosphorylated which leads to weakened interaction with TNS3 and enhanced interaction with PTEN. Interacts (via C-terminus) with tensin TNS4 (via SH2 domain); the interaction is independent of tyrosine phosphorylation of DLC1.

The protein resides in the cytoplasm. The protein localises to the cell junction. It localises to the focal adhesion. Its subcellular location is the membrane. Functionally, functions as a GTPase-activating protein for the small GTPases RHOA, RHOB, RHOC and CDC42, terminating their downstream signaling. This induces morphological changes and detachment through cytoskeletal reorganization, playing a critical role in biological processes such as cell migration and proliferation. Also functions in vivo as an activator of the phospholipase PLCD1. Active DLC1 increases cell migration velocity but reduces directionality. Required for growth factor-induced epithelial cell migration; in resting cells, interacts with TNS3 while PTEN interacts with the p85 regulatory subunit of the PI3K kinase complex but growth factor stimulation induces phosphorylation of TNS3 and PTEN, causing them to change their binding preference so that PTEN interacts with DLC1 and TNS3 interacts with p85. The PTEN-DLC1 complex translocates to the posterior of migrating cells to activate RHOA while the TNS3-p85 complex translocates to the leading edge of migrating cells to promote RAC1 activation. This is Rho GTPase-activating protein 7 (DLC1) from Canis lupus familiaris (Dog).